Reading from the N-terminus, the 399-residue chain is S-adenosylmethionine synthase (399 aa).

ATP is bound at residue His17. A Mg(2+)-binding site is contributed by Asp19. Glu45 lines the K(+) pocket. L-methionine contacts are provided by Glu58 and Gln101. Positions 101-111 (QSADIAMGVDQ) are flexible loop. ATP-binding positions include 177–179 (DGK), 244–245 (RF), Asp253, 259–260 (RK), Ala276, and Lys280. Position 253 (Asp253) interacts with L-methionine. Residue Lys284 participates in L-methionine binding.

It belongs to the AdoMet synthase family. As to quaternary structure, homotetramer; dimer of dimers. Mg(2+) serves as cofactor. K(+) is required as a cofactor.

The protein localises to the cytoplasm. The enzyme catalyses L-methionine + ATP + H2O = S-adenosyl-L-methionine + phosphate + diphosphate. It participates in amino-acid biosynthesis; S-adenosyl-L-methionine biosynthesis; S-adenosyl-L-methionine from L-methionine: step 1/1. Catalyzes the formation of S-adenosylmethionine (AdoMet) from methionine and ATP. The overall synthetic reaction is composed of two sequential steps, AdoMet formation and the subsequent tripolyphosphate hydrolysis which occurs prior to release of AdoMet from the enzyme. This is S-adenosylmethionine synthase from Bacillus thuringiensis (strain Al Hakam).